Reading from the N-terminus, the 160-residue chain is Transcription antitermination protein NusB (160 aa).

It belongs to the NusB family.

Functionally, involved in transcription antitermination. Required for transcription of ribosomal RNA (rRNA) genes. Binds specifically to the boxA antiterminator sequence of the ribosomal RNA (rrn) operons. The chain is Transcription antitermination protein NusB from Rhizobium leguminosarum bv. trifolii (strain WSM2304).